Here is a 280-residue protein sequence, read N- to C-terminus: Polyamine aminopropyltransferase 1 (280 aa).

Positions 3-237 (DIVFIERDPY…YWWTFSIASK (235 aa)) constitute a PABS domain. Residue glutamine 33 coordinates S-methyl-5'-thioadenosine. Spermidine-binding residues include histidine 64 and aspartate 88. Residues aspartate 108 and 139 to 140 (DG) contribute to the S-methyl-5'-thioadenosine site. The Proton acceptor role is filled by aspartate 157. Residue 157–160 (DSTD) coordinates spermidine.

This sequence belongs to the spermidine/spermine synthase family. In terms of assembly, homodimer or homotetramer.

Its subcellular location is the cytoplasm. It carries out the reaction S-adenosyl 3-(methylsulfanyl)propylamine + putrescine = S-methyl-5'-thioadenosine + spermidine + H(+). The protein operates within amine and polyamine biosynthesis; spermidine biosynthesis; spermidine from putrescine: step 1/1. In terms of biological role, catalyzes the irreversible transfer of a propylamine group from the amino donor S-adenosylmethioninamine (decarboxy-AdoMet) to putrescine (1,4-diaminobutane) to yield spermidine. The polypeptide is Polyamine aminopropyltransferase 1 (Aquifex aeolicus (strain VF5)).